Here is a 254-residue protein sequence, read N- to C-terminus: MTELYAKSDLEKIKETLPGWQLDSFNYLNEKIGDKENKFPCIPGRQAFLSDQLRIAFVGDPRNPETAKELAPLLTRYGTISRETGKYASLTVIFHTPEELLTDYKIEDYESLFWQLLNSLSMEDPADWPDDIPENPDNFQWEYCFNGEPYFVLCATPAHSKRKSRSFPYFMLTFQPRWVFEDLNDTTAFGRNMSKQIRKRLEAYDEVPIHPHLGWYGKKDNLEWKQYFLRDDENQVSQCPFMKMKNLFKKKRSD.

The protein belongs to the DcsA family.

This is an uncharacterized protein from Bacillus subtilis (strain 168).